The following is an 895-amino-acid chain: Isoleucine--tRNA ligase (895 aa).

The 'HIGH' region motif lies at 57 to 67; the sequence is PYANGSIHVGH. Residue Glu549 coordinates L-isoleucyl-5'-AMP. Positions 590–594 match the 'KMSKS' region motif; it reads KMSKS. Lys593 contributes to the ATP binding site. Zn(2+) contacts are provided by Cys869, Cys872, Cys888, and Cys891.

It belongs to the class-I aminoacyl-tRNA synthetase family. IleS type 1 subfamily. As to quaternary structure, monomer. The cofactor is Zn(2+).

It localises to the cytoplasm. The catalysed reaction is tRNA(Ile) + L-isoleucine + ATP = L-isoleucyl-tRNA(Ile) + AMP + diphosphate. In terms of biological role, catalyzes the attachment of isoleucine to tRNA(Ile). As IleRS can inadvertently accommodate and process structurally similar amino acids such as valine, to avoid such errors it has two additional distinct tRNA(Ile)-dependent editing activities. One activity is designated as 'pretransfer' editing and involves the hydrolysis of activated Val-AMP. The other activity is designated 'posttransfer' editing and involves deacylation of mischarged Val-tRNA(Ile). In Mycoplasma genitalium (strain ATCC 33530 / DSM 19775 / NCTC 10195 / G37) (Mycoplasmoides genitalium), this protein is Isoleucine--tRNA ligase.